Reading from the N-terminus, the 112-residue chain is Histone H2A, sperm (112 aa).

N5-methylglutamine is present on Gln-91. Lys-106 participates in a covalent cross-link: Glycyl lysine isopeptide (Lys-Gly) (interchain with G-Cter in ubiquitin).

It belongs to the histone H2A family. As to quaternary structure, the nucleosome is a histone octamer containing two molecules each of H2A, H2B, H3 and H4 assembled in one H3-H4 heterotetramer and two H2A-H2B heterodimers. The octamer wraps approximately 147 bp of DNA. Post-translationally, monoubiquitination gives a specific tag for epigenetic transcriptional repression.

The protein resides in the nucleus. It localises to the chromosome. In terms of biological role, core component of nucleosome. Nucleosomes wrap and compact DNA into chromatin, limiting DNA accessibility to the cellular machineries which require DNA as a template. Histones thereby play a central role in transcription regulation, DNA repair, DNA replication and chromosomal stability. DNA accessibility is regulated via a complex set of post-translational modifications of histones, also called histone code, and nucleosome remodeling. The polypeptide is Histone H2A, sperm (Lytechinus pictus (Painted sea urchin)).